Reading from the N-terminus, the 662-residue chain is UPF0313 protein CPR_1216 (662 aa).

Residues 296 to 567 form the Radical SAM core domain; sequence AIEEVKFSLV…AMQRALLQFK (272 aa). Residues Cys310, Cys314, and Cys317 each contribute to the [4Fe-4S] cluster site. The interval 597–662 is disordered; the sequence is RDKNSFGKGN…QRVSKGKKRR (66 aa). The segment covering 618–632 has biased composition (basic and acidic residues); it reads SRNENSGRRESEDKK. The span at 633 to 644 shows a compositional bias: basic residues; it reads RSSHSKKQRGNK.

Belongs to the UPF0313 family. Requires [4Fe-4S] cluster as cofactor.

In Clostridium perfringens (strain SM101 / Type A), this protein is UPF0313 protein CPR_1216.